The sequence spans 395 residues: MNFKRMTDLDLSEKRVLIREDLNVPVKNGQITSDARLRAALPTIQAALAQGAAVMVCSHLGRPVEGEPKPEQSLAPVAAYLSDALGQEVKLLTDYLEGVEIAPGQVVLLENVRFNLGEKKNNAELAQKYAALCDVFVMDAFGTAHRAEASTEGAARYAKVAAAGPLLATELDALGRALQTPEKPMVAIVAGSKVSTKLDVLTSLSDICGQLIVGGGIANTFLAAAGFNVGKSLCENDLIDTAKAIAAKVSVPLPTDVVVADATEIDFADFLGSLAKAQAIVKKVEDIADNDMILDVGPDTAKAFAEILKTAKTILWNGPVGVFEVDQFGEGTKTLSLAIAESKGFSIAGGGDTLAAIDKYKVADKIGYISTGGGAFLEFVEGKTLPAVAVLLERA.

Substrate contacts are provided by residues 21–23 (DLN), Arg36, 59–62 (HLGR), Arg113, and Arg146. ATP is bound by residues Lys197, Glu324, and 350-353 (GGDT).

This sequence belongs to the phosphoglycerate kinase family. As to quaternary structure, monomer.

Its subcellular location is the cytoplasm. The enzyme catalyses (2R)-3-phosphoglycerate + ATP = (2R)-3-phospho-glyceroyl phosphate + ADP. The protein operates within carbohydrate degradation; glycolysis; pyruvate from D-glyceraldehyde 3-phosphate: step 2/5. The sequence is that of Phosphoglycerate kinase from Acinetobacter baylyi (strain ATCC 33305 / BD413 / ADP1).